A 92-amino-acid chain; its full sequence is MPRSLKKGPFVDHHLMKKVLEQNEKGTKNVIKTWSRRSMVVPEMIGHTIAVHDGRKHVPVFITEAMIGHKLGEFAPTRTFRSHVKEDRRSRR.

It belongs to the universal ribosomal protein uS19 family.

Protein S19 forms a complex with S13 that binds strongly to the 16S ribosomal RNA. In Thermobifida fusca (strain YX), this protein is Small ribosomal subunit protein uS19.